The chain runs to 186 residues: Protein GrpE (186 aa).

Over residues 1–15 (MADEQQTLDQQTPEQ) the composition is skewed to polar residues. The disordered stretch occupies residues 1–20 (MADEQQTLDQQTPEQPTGAA).

The protein belongs to the GrpE family. Homodimer.

It localises to the cytoplasm. In terms of biological role, participates actively in the response to hyperosmotic and heat shock by preventing the aggregation of stress-denatured proteins, in association with DnaK and GrpE. It is the nucleotide exchange factor for DnaK and may function as a thermosensor. Unfolded proteins bind initially to DnaJ; upon interaction with the DnaJ-bound protein, DnaK hydrolyzes its bound ATP, resulting in the formation of a stable complex. GrpE releases ADP from DnaK; ATP binding to DnaK triggers the release of the substrate protein, thus completing the reaction cycle. Several rounds of ATP-dependent interactions between DnaJ, DnaK and GrpE are required for fully efficient folding. The protein is Protein GrpE of Pseudomonas aeruginosa (strain UCBPP-PA14).